A 406-amino-acid chain; its full sequence is Acetylornithine aminotransferase (406 aa).

Pyridoxal 5'-phosphate-binding positions include 108-109 (GA) and Phe141. Arg144 lines the N(2)-acetyl-L-ornithine pocket. Residue 226-229 (DEVQ) participates in pyridoxal 5'-phosphate binding. At Lys255 the chain carries N6-(pyridoxal phosphate)lysine. Position 283 (Thr283) interacts with N(2)-acetyl-L-ornithine. Thr284 is a binding site for pyridoxal 5'-phosphate.

The protein belongs to the class-III pyridoxal-phosphate-dependent aminotransferase family. ArgD subfamily. In terms of assembly, homodimer. It depends on pyridoxal 5'-phosphate as a cofactor.

Its subcellular location is the cytoplasm. The catalysed reaction is N(2)-acetyl-L-ornithine + 2-oxoglutarate = N-acetyl-L-glutamate 5-semialdehyde + L-glutamate. The protein operates within amino-acid biosynthesis; L-arginine biosynthesis; N(2)-acetyl-L-ornithine from L-glutamate: step 4/4. This chain is Acetylornithine aminotransferase, found in Pseudomonas putida (strain ATCC 47054 / DSM 6125 / CFBP 8728 / NCIMB 11950 / KT2440).